A 292-amino-acid chain; its full sequence is UPF0696 protein C11orf68 homolog (292 aa).

Residues 1–10 are compositionally biased toward low complexity; sequence MAAAAAAVAG. The tract at residues 1–60 is disordered; that stretch reads MAAAAAAVAGAGRGGGGGAEPRQERSRARGWAGAERSEGRRMEPGEELEEEDSPGGREDG. The segment covering 35-44 has biased composition (basic and acidic residues); sequence ERSEGRRMEP.

The protein belongs to the UPF0696 family.

This is UPF0696 protein C11orf68 homolog from Bos taurus (Bovine).